A 174-amino-acid polypeptide reads, in one-letter code: Co-chaperone protein HscB (174 aa).

The J domain maps to 2–74 (NYFTLFDLPR…LNRAIYFLCL (73 aa)).

It belongs to the HscB family. In terms of assembly, interacts with HscA and stimulates its ATPase activity. Interacts with IscU.

Its function is as follows. Co-chaperone involved in the maturation of iron-sulfur cluster-containing proteins. Seems to help targeting proteins to be folded toward HscA. This Buchnera aphidicola subsp. Acyrthosiphon pisum (strain Tuc7) protein is Co-chaperone protein HscB.